A 388-amino-acid polypeptide reads, in one-letter code: Staphopain A (388 aa).

A signal peptide spans 1-25 (MKRNFPKLIALSLIFSLSITPIANA). The propeptide occupies 26–214 (ESNSNIKAKD…TSQFKSNNYT (189 aa)). Residues C238, H334, and N355 contribute to the active site.

The protein belongs to the peptidase C47 family. In terms of assembly, in the cytoplasm, prematurely activated/folded ScpA forms a stable non-covalent complex with ScpB. Post-translationally, cleavage leads to the activation of ScpA probably by an auto-catalytic manner.

It is found in the secreted. The catalysed reaction is Broad endopeptidase action on proteins including elastin, but rather limited hydrolysis of small-molecule substrates. Assays are conveniently made with hemoglobin, casein or Z-Phe-Arg-NHMec as substrate.. With respect to regulation, prematurely activated/folded staphopain A is inhibited by staphostatin A (ScpB), which is probably required to protect staphylococcal cytoplasmic proteins from degradation by ScpA. Its function is as follows. Cysteine protease that plays an important role in the inhibition of host innate immune response. Cleaves host elastins found in connective tissues, pulmonary surfactant protein A in the lungs, and the chemokine receptor CXCR2 on leukocytes. Proteolytic cleavage of surfactant protein A impairs bacterial phagocytosis by neutrophils while CXCR2 degradation blocks neutrophil activation and chemotaxis. Additionally, promotes vascular leakage by activating the plasma kallikerin/kinin system, resulting in hypotension. In Staphylococcus aureus (strain MRSA252), this protein is Staphopain A (sspP).